The chain runs to 711 residues: Mitochondrial intermediate peptidase (711 aa).

The N-terminal 33 residues, 1–33, are a transit peptide targeting the mitochondrion; the sequence is MLLAAGARYARRLCGRGAAAALQGRTGRSCARD. Lys-124 is subject to N6-acetyllysine. His-493 is a Zn(2+) binding site. The active site involves Glu-494. Zn(2+)-binding residues include His-497 and His-500.

Belongs to the peptidase M3 family. Monomer. Zn(2+) serves as cofactor.

Its subcellular location is the mitochondrion matrix. The catalysed reaction is Release of an N-terminal octapeptide as second stage of processing of some proteins imported into the mitochondrion.. Its activity is regulated as follows. Activity is divalent cation-dependent. It is stimulated by manganese, magnesium or calcium ions and reversibly inhibited by zinc, cobalt and iron. Functionally, cleaves proteins, imported into the mitochondrion, to their mature size. This Mus musculus (Mouse) protein is Mitochondrial intermediate peptidase (Mipep).